Consider the following 355-residue polypeptide: F-box only protein 32 (355 aa).

Residues 62 to 67 (KKRKKD) carry the Nuclear localization signal motif. The Nuclear export signal signature appears at 169–173 (LLQTL). The F-box domain maps to 223–271 (LTFTDLPLCLQLNIMQRLSDGRDLVSLGQVAPDLHVLSEDRLLWKKLCQ). The Bipartite nuclear localization signal signature appears at 280-295 (RKRLILSDKGQLDWKK).

Part of the SCF (SKP1-CUL1-F-box) E3 ubiquitin-protein ligase complex SCF(FBXO32) formed of CUL1, SKP1, RBX1 and FBXO32.

The protein localises to the cytoplasm. Its subcellular location is the nucleus. Its pathway is protein modification; protein ubiquitination. Its function is as follows. Substrate recognition component of a SCF (SKP1-CUL1-F-box protein) E3 ubiquitin-protein ligase complex which mediates the ubiquitination and subsequent proteasomal degradation of target proteins. Probably recognizes and binds to phosphorylated target proteins during skeletal muscle atrophy. Recognizes TERF1. The protein is F-box only protein 32 (FBXO32) of Bos taurus (Bovine).